We begin with the raw amino-acid sequence, 106 residues long: uncharacterized protein (106 aa).

2 helical membrane passes run 53-70 and 74-93; these read LLLL…LDII and ILGL…WTLI.

Its subcellular location is the cell membrane. This is an uncharacterized protein from Bacillus subtilis (strain 168).